The following is a 1608-amino-acid chain: DNA-directed RNA polymerase III subunit rpc2 (1608 aa).

Cysteine 1557, cysteine 1560, cysteine 1569, and cysteine 1572 together coordinate Zn(2+). A C4-type zinc finger spans residues 1557-1572 (CKNCGFLGYEGYCQYC).

It belongs to the RNA polymerase beta chain family. As to quaternary structure, component of the RNA polymerase III (Pol III) complex. Post-translationally, this protein undergoes a protein self splicing that involves a post-translational excision of the intervening region (intein) followed by peptide ligation.

It localises to the nucleus. The enzyme catalyses RNA(n) + a ribonucleoside 5'-triphosphate = RNA(n+1) + diphosphate. In terms of biological role, DNA-dependent RNA polymerase catalyzes the transcription of DNA into RNA using the four ribonucleoside triphosphates as substrates. Second largest core component of RNA polymerase III which synthesizes small RNAs, such as 5S rRNA and tRNAs. Proposed to contribute to the polymerase catalytic activity and forms the polymerase active center together with the largest subunit. Pol III is composed of mobile elements and rpc2 is part of the core element with the central large cleft and probably a clamp element that moves to open and close the cleft. In Dictyostelium discoideum (Social amoeba), this protein is DNA-directed RNA polymerase III subunit rpc2 (polr3b).